A 772-amino-acid polypeptide reads, in one-letter code: Acetamidase regulatory protein (772 aa).

The span at 1–16 (MSSTAQKNSLSPTGNG) shows a compositional bias: polar residues. Residues 1-23 (MSSTAQKNSLSPTGNGVTKRKSG) are disordered. The segment at residues 26-59 (ACVHCHRRKVRCDARIVGLPCSNCRSSGKTDCRI) is a DNA-binding region (zn(2)-C6 fungal-type). Disordered regions lie at residues 78–99 (RCRPPSTSEHVPEASPPSTISE), 114–148 (AAAPPASVAPNVQSKAQHLHSNSYSQTSPQAQECH), and 627–690 (ATSE…QTAV). Low complexity predominate over residues 114–123 (AAAPPASVAP). 2 stretches are compositionally biased toward polar residues: residues 124–144 (NVQSKAQHLHSNSYSQTSPQA) and 634–658 (PFSSTQDQPQAQALDQNKNQHQHSS). The span at 671–686 (LLPSYDSPTPDSTSLP) shows a compositional bias: low complexity.

The protein localises to the nucleus. Its function is as follows. Positively regulates the expression of genes involved in the catabolism of certain amides, omega amino acids, and lactams. The protein is Acetamidase regulatory protein (amdR) of Aspergillus fumigatus (strain ATCC MYA-4609 / CBS 101355 / FGSC A1100 / Af293) (Neosartorya fumigata).